The sequence spans 217 residues: Elongation factor Ts (217 aa).

The segment at 82 to 85 is involved in Mg(2+) ion dislocation from EF-Tu; that stretch reads TDFV.

It belongs to the EF-Ts family.

It localises to the cytoplasm. Associates with the EF-Tu.GDP complex and induces the exchange of GDP to GTP. It remains bound to the aminoacyl-tRNA.EF-Tu.GTP complex up to the GTP hydrolysis stage on the ribosome. In Prochlorococcus marinus (strain SARG / CCMP1375 / SS120), this protein is Elongation factor Ts.